The chain runs to 101 residues: Aspartyl/glutamyl-tRNA(Asn/Gln) amidotransferase subunit C (101 aa).

The protein belongs to the GatC family. As to quaternary structure, heterotrimer of A, B and C subunits.

It catalyses the reaction L-glutamyl-tRNA(Gln) + L-glutamine + ATP + H2O = L-glutaminyl-tRNA(Gln) + L-glutamate + ADP + phosphate + H(+). It carries out the reaction L-aspartyl-tRNA(Asn) + L-glutamine + ATP + H2O = L-asparaginyl-tRNA(Asn) + L-glutamate + ADP + phosphate + 2 H(+). Functionally, allows the formation of correctly charged Asn-tRNA(Asn) or Gln-tRNA(Gln) through the transamidation of misacylated Asp-tRNA(Asn) or Glu-tRNA(Gln) in organisms which lack either or both of asparaginyl-tRNA or glutaminyl-tRNA synthetases. The reaction takes place in the presence of glutamine and ATP through an activated phospho-Asp-tRNA(Asn) or phospho-Glu-tRNA(Gln). The protein is Aspartyl/glutamyl-tRNA(Asn/Gln) amidotransferase subunit C of Salinispora tropica (strain ATCC BAA-916 / DSM 44818 / JCM 13857 / NBRC 105044 / CNB-440).